Consider the following 79-residue polypeptide: Scutelatoxin (79 aa).

Positions 1-21 (MKTLLLTLVVMTIMCLDLGYT) are cleaved as a signal peptide. Cystine bridges form between cysteine 24-cysteine 41, cysteine 34-cysteine 59, cysteine 63-cysteine 71, and cysteine 72-cysteine 77.

This sequence belongs to the three-finger toxin family. Short-chain subfamily. As to expression, expressed by the venom gland.

It localises to the secreted. The polypeptide is Scutelatoxin (Oxyuranus scutellatus scutellatus (Australian taipan)).